The primary structure comprises 326 residues: Septum site-determining protein minD homolog, chloroplastic (326 aa).

The N-terminal 62 residues, 1 to 62, are a transit peptide targeting the chloroplast; it reads MASLRLFSTN…LAGETPRIVV (62 aa). Position 67–74 (67–74) interacts with ATP; that stretch reads KGGVGKTT.

This sequence belongs to the ParA family. MinD subfamily. In terms of assembly, homodimer. Interacts with MINE1. Binds to ARC3. Interacts with MCD1. Interacts with CDP1/PARC6.

The protein localises to the plastid. The protein resides in the chloroplast inner membrane. Its activity is regulated as follows. Stimulated ATPase activity by MINE1. Together with ARC3 and MCD1, regulates FtsZ ring positioning in chloroplasts in an ARC6-dependent manner. Calcium-dependent ATPase required for the correct placement of the plastid division site. Inhibits FtsZ filament and ring formation in the plastid. Mediates inhibition of plastid division. In cooperation with MINE1, prevents FtsZ ring formation anywhere outside of the mid-plastids. In Arabidopsis thaliana (Mouse-ear cress), this protein is Septum site-determining protein minD homolog, chloroplastic.